Consider the following 161-residue polypeptide: Protein translocase subunit SecE (161 aa).

Acidic residues predominate over residues 1-12 (MSDEGDVADEAV). Residues 1-80 (MSDEGDVADE…GVAKDDSTTK (80 aa)) are disordered. Residues 133–153 (VVLAFLAFMVALVAGADLGLT) traverse the membrane as a helical segment.

The protein belongs to the SecE/SEC61-gamma family. In terms of assembly, component of the Sec protein translocase complex. Heterotrimer consisting of SecY, SecE and SecG subunits. The heterotrimers can form oligomers, although 1 heterotrimer is thought to be able to translocate proteins. Interacts with the ribosome. Interacts with SecDF, and other proteins may be involved. Interacts with SecA.

It localises to the cell membrane. In terms of biological role, essential subunit of the Sec protein translocation channel SecYEG. Clamps together the 2 halves of SecY. May contact the channel plug during translocation. This is Protein translocase subunit SecE from Mycobacterium bovis (strain ATCC BAA-935 / AF2122/97).